The primary structure comprises 359 residues: Phosphoserine aminotransferase (359 aa).

Position 42 (Arg-42) interacts with L-glutamate. Residues 76 to 77 (AS), Trp-102, Thr-151, Asp-170, and Gln-193 contribute to the pyridoxal 5'-phosphate site. At Lys-194 the chain carries N6-(pyridoxal phosphate)lysine. Pyridoxal 5'-phosphate is bound at residue 235–236 (NT).

This sequence belongs to the class-V pyridoxal-phosphate-dependent aminotransferase family. SerC subfamily. As to quaternary structure, homodimer. The cofactor is pyridoxal 5'-phosphate.

It localises to the cytoplasm. It catalyses the reaction O-phospho-L-serine + 2-oxoglutarate = 3-phosphooxypyruvate + L-glutamate. The catalysed reaction is 4-(phosphooxy)-L-threonine + 2-oxoglutarate = (R)-3-hydroxy-2-oxo-4-phosphooxybutanoate + L-glutamate. The protein operates within amino-acid biosynthesis; L-serine biosynthesis; L-serine from 3-phospho-D-glycerate: step 2/3. It participates in cofactor biosynthesis; pyridoxine 5'-phosphate biosynthesis; pyridoxine 5'-phosphate from D-erythrose 4-phosphate: step 3/5. Catalyzes the reversible conversion of 3-phosphohydroxypyruvate to phosphoserine and of 3-hydroxy-2-oxo-4-phosphonooxybutanoate to phosphohydroxythreonine. The chain is Phosphoserine aminotransferase (serC) from Bacillus subtilis (strain 168).